A 571-amino-acid chain; its full sequence is Carboxylesterase 3 (571 aa).

A signal peptide spans 1 to 26 (MERAVRVESGVLVGVVCLLLACPATA). Cysteine 97 and cysteine 124 are joined by a disulfide. Asparagine 105 carries an N-linked (GlcNAc...) asparagine glycan. Serine 229 (acyl-ester intermediate) is an active-site residue. Cysteines 281 and 292 form a disulfide. Residues glutamate 347 and histidine 460 each act as charge relay system in the active site. Positions 568–571 (QEDL) match the Prevents secretion from ER motif.

The protein belongs to the type-B carboxylesterase/lipase family. In terms of processing, N-glycosylated. Expressed in liver, colon and small intestine.

Its subcellular location is the endoplasmic reticulum lumen. It catalyses the reaction a carboxylic ester + H2O = an alcohol + a carboxylate + H(+). In terms of biological role, involved in the detoxification of xenobiotics and in the activation of ester and amide prodrugs. Shows low catalytic efficiency for hydrolysis of CPT-11 (7-ethyl-10-[4-(1-piperidino)-1-piperidino]-carbonyloxycamptothecin), a prodrug for camptothecin used in cancer therapeutics. This Homo sapiens (Human) protein is Carboxylesterase 3 (CES3).